A 587-amino-acid polypeptide reads, in one-letter code: MKPVLHSGSSSNGFSHRRFEKEAWMNNAQPSVDNTENGWDAESVDTPSQKLLVYFTTCNIGHQVEVHLKNGSVYSGIFHAANVEKDFGIILKMACLIRDSRGTKSRTVSKPSSKLLKIPADELVQVIAKDLPLSSDSVSDSVQCEKPLELLTDSLISQFYNVDLERELKPWVPDEDVPDCSDLENVFDDPWKRGWNQFEVNKTLFGVTSTFDEELYTTKLERGPGTRELEEQALRIAREIVGENTRDIHVAEERGLQLSGKFDIDEETKYSSVCATNRFDDTCYEDDEEEEEDILLDCCNNLTFGDSSASDGKEPASTGKFYEDSWGDSLHLRSNKMVDQSWSNSNKHTRQLMSELPSKDFPVAGNNIRNESQLGEQRKSKFLGASLFKKPSEESVSGFEDAPPPVKPSFIDGRLGLLSDRAKSENSSGWPGSSISRNSENSAASSASNLPILSPSSSGSLSSEKSTLNPNAKEFKLNPNAKSFKPSPSATRPQSPQSPVFDGSFYYPPVPPMPGLHIRYGTGAAFPGQQHPMMYNNTTQLSPNQTYYSPNSPQYPQPMMVTQQRPILFMPPTPYQPEMPYKGRDSY.

The region spanning 51–132 (LLVYFTTCNI…LVQVIAKDLP (82 aa)) is the Sm domain. The disordered stretch occupies residues 422–503 (AKSENSSGWP…QSPQSPVFDG (82 aa)). Residues 431–464 (PGSSISRNSENSAASSASNLPILSPSSSGSLSSE) are compositionally biased toward low complexity. Positions 467–475 (TLNPNAKEF) match the PAM2-like 1; degenerate motif. Positions 476-486 (KLNPNAKSFKP) match the PAM2-like 2 motif. A compositionally biased stretch (polar residues) spans 486 to 498 (PSPSATRPQSPQS).

This is Polyadenylate-binding protein-interacting protein 3 (CID3) from Arabidopsis thaliana (Mouse-ear cress).